Reading from the N-terminus, the 119-residue chain is Basic phospholipase A2 notechis II-5 (119 aa).

7 cysteine pairs are disulfide-bonded: cysteine 11/cysteine 71, cysteine 27/cysteine 118, cysteine 29/cysteine 45, cysteine 44/cysteine 99, cysteine 51/cysteine 92, cysteine 60/cysteine 85, and cysteine 78/cysteine 90. Positions 28, 30, and 32 each coordinate Ca(2+). Residue histidine 48 is part of the active site. Position 49 (aspartate 49) interacts with Ca(2+). Residue aspartate 93 is part of the active site.

This sequence belongs to the phospholipase A2 family. Group I subfamily. D49 sub-subfamily. It depends on Ca(2+) as a cofactor. As to expression, expressed by the venom gland.

The protein resides in the secreted. It carries out the reaction a 1,2-diacyl-sn-glycero-3-phosphocholine + H2O = a 1-acyl-sn-glycero-3-phosphocholine + a fatty acid + H(+). Functionally, snake venom phospholipase A2 (PLA2) that inhibits neuromuscular transmission by blocking acetylcholine release from the nerve termini. Notechis II-5 is less toxic than notexin but has a higher specific phospholipase activity. PLA2 catalyzes the calcium-dependent hydrolysis of the 2-acyl groups in 3-sn-phosphoglycerides. This is Basic phospholipase A2 notechis II-5 from Notechis scutatus scutatus (Mainland tiger snake).